A 101-amino-acid chain; its full sequence is Protein translation factor SUI1 homolog (101 aa).

This sequence belongs to the SUI1 family.

In Aeropyrum pernix (strain ATCC 700893 / DSM 11879 / JCM 9820 / NBRC 100138 / K1), this protein is Protein translation factor SUI1 homolog.